Consider the following 226-residue polypeptide: Urease accessory protein UreF (226 aa).

The protein belongs to the UreF family. UreD, UreF and UreG form a complex that acts as a GTP-hydrolysis-dependent molecular chaperone, activating the urease apoprotein by helping to assemble the nickel containing metallocenter of UreC. The UreE protein probably delivers the nickel.

It localises to the cytoplasm. Its function is as follows. Required for maturation of urease via the functional incorporation of the urease nickel metallocenter. This is Urease accessory protein UreF from Burkholderia ambifaria (strain MC40-6).